The sequence spans 254 residues: 5-oxoprolinase subunit A (254 aa).

This sequence belongs to the LamB/PxpA family. In terms of assembly, forms a complex composed of PxpA, PxpB and PxpC.

It catalyses the reaction 5-oxo-L-proline + ATP + 2 H2O = L-glutamate + ADP + phosphate + H(+). Functionally, catalyzes the cleavage of 5-oxoproline to form L-glutamate coupled to the hydrolysis of ATP to ADP and inorganic phosphate. In Burkholderia ambifaria (strain MC40-6), this protein is 5-oxoprolinase subunit A.